Here is a 248-residue protein sequence, read N- to C-terminus: 3-deoxy-manno-octulosonate cytidylyltransferase (248 aa).

The protein belongs to the KdsB family.

The protein resides in the cytoplasm. It catalyses the reaction 3-deoxy-alpha-D-manno-oct-2-ulosonate + CTP = CMP-3-deoxy-beta-D-manno-octulosonate + diphosphate. Its pathway is nucleotide-sugar biosynthesis; CMP-3-deoxy-D-manno-octulosonate biosynthesis; CMP-3-deoxy-D-manno-octulosonate from 3-deoxy-D-manno-octulosonate and CTP: step 1/1. It functions in the pathway bacterial outer membrane biogenesis; lipopolysaccharide biosynthesis. Functionally, activates KDO (a required 8-carbon sugar) for incorporation into bacterial lipopolysaccharide in Gram-negative bacteria. The chain is 3-deoxy-manno-octulosonate cytidylyltransferase from Erwinia tasmaniensis (strain DSM 17950 / CFBP 7177 / CIP 109463 / NCPPB 4357 / Et1/99).